Reading from the N-terminus, the 37-residue chain is Calcitonin gene-related peptide (37 aa).

The cysteines at positions 2 and 7 are disulfide-linked. Phenylalanine 37 bears the Phenylalanine amide mark.

This sequence belongs to the calcitonin family.

CGRP induces vasodilation. It dilates a variety of vessels including the coronary, cerebral and systemic vasculature. Its abundance in the CNS also points toward a neurotransmitter or neuromodulator role. This chain is Calcitonin gene-related peptide, found in Pelophylax ridibundus (Marsh frog).